Here is a 392-residue protein sequence, read N- to C-terminus: 8-amino-7-oxononanoate synthase (392 aa).

R19 is a substrate binding site. 106-107 contributes to the pyridoxal 5'-phosphate binding site; it reads GY. Residue H131 coordinates substrate. Residues S176, H204, and T233 each contribute to the pyridoxal 5'-phosphate site. The residue at position 236 (K236) is an N6-(pyridoxal phosphate)lysine. T350 provides a ligand contact to substrate.

It belongs to the class-II pyridoxal-phosphate-dependent aminotransferase family. BioF subfamily. Homodimer. Requires pyridoxal 5'-phosphate as cofactor.

It carries out the reaction 6-carboxyhexanoyl-[ACP] + L-alanine + H(+) = (8S)-8-amino-7-oxononanoate + holo-[ACP] + CO2. Its pathway is cofactor biosynthesis; biotin biosynthesis. Functionally, catalyzes the decarboxylative condensation of pimeloyl-[acyl-carrier protein] and L-alanine to produce 8-amino-7-oxononanoate (AON), [acyl-carrier protein], and carbon dioxide. The protein is 8-amino-7-oxononanoate synthase of Stutzerimonas stutzeri (strain A1501) (Pseudomonas stutzeri).